The chain runs to 217 residues: Adapter protein MecA (217 aa).

This sequence belongs to the MecA family. Homodimer.

In terms of biological role, enables the recognition and targeting of unfolded and aggregated proteins to the ClpC protease or to other proteins involved in proteolysis. The polypeptide is Adapter protein MecA (Listeria monocytogenes serovar 1/2a (strain ATCC BAA-679 / EGD-e)).